Here is a 224-residue protein sequence, read N- to C-terminus: UPF0758 protein PSHAa2643 (224 aa).

An MPN domain is found at 102–224 (IFNSPNAVYD…CVSFAERGLI (123 aa)). Residues His173, His175, and Asp186 each coordinate Zn(2+). Residues 173 to 186 (HNHPSGIAEPSQAD) carry the JAMM motif motif.

Belongs to the UPF0758 family.

The chain is UPF0758 protein PSHAa2643 from Pseudoalteromonas translucida (strain TAC 125).